The chain runs to 522 residues: O-fucosyltransferase 38 (522 aa).

The helical; Signal-anchor for type II membrane protein transmembrane segment at 26-46 threads the bilayer; sequence AISLYLIFVFAFTIWVLVFSS. Over residues 54–67 the composition is skewed to basic and acidic residues; the sequence is DHTKHQQQHHRDLI. Positions 54–73 are disordered; the sequence is DHTKHQQQHHRDLIDSESFP. A glycan (N-linked (GlcNAc...) asparagine) is linked at N147. 284–286 lines the substrate pocket; the sequence is HLR. Residue N325 is glycosylated (N-linked (GlcNAc...) asparagine). A disordered region spans residues 475–496; it reads HKDRQGAPRRRKGPTQGIKGRA.

This sequence belongs to the glycosyltransferase GT106 family.

It localises to the membrane. The protein operates within glycan metabolism. The sequence is that of O-fucosyltransferase 38 from Arabidopsis thaliana (Mouse-ear cress).